Reading from the N-terminus, the 309-residue chain is Foldase protein PrsA 2 (309 aa).

Positions 1–20 (MKYRLIGVGASLVVAVMLTG) are cleaved as a signal peptide. Cysteine 21 carries the N-palmitoyl cysteine lipid modification. The S-diacylglycerol cysteine moiety is linked to residue cysteine 21. The PpiC domain occupies 137–232 (MPMTTVQHIA…TADTKDKPTY (96 aa)).

Belongs to the PrsA family.

It is found in the cell membrane. It catalyses the reaction [protein]-peptidylproline (omega=180) = [protein]-peptidylproline (omega=0). Functionally, plays a major role in protein secretion by helping the post-translocational extracellular folding of several secreted proteins. In Lactiplantibacillus plantarum (strain ATCC BAA-793 / NCIMB 8826 / WCFS1) (Lactobacillus plantarum), this protein is Foldase protein PrsA 2 (prsA2).